The primary structure comprises 285 residues: 2-dehydro-3-deoxyphosphooctonate aldolase (285 aa).

It belongs to the KdsA family.

The protein resides in the cytoplasm. The catalysed reaction is D-arabinose 5-phosphate + phosphoenolpyruvate + H2O = 3-deoxy-alpha-D-manno-2-octulosonate-8-phosphate + phosphate. The protein operates within carbohydrate biosynthesis; 3-deoxy-D-manno-octulosonate biosynthesis; 3-deoxy-D-manno-octulosonate from D-ribulose 5-phosphate: step 2/3. It functions in the pathway bacterial outer membrane biogenesis; lipopolysaccharide biosynthesis. In Delftia acidovorans (strain DSM 14801 / SPH-1), this protein is 2-dehydro-3-deoxyphosphooctonate aldolase.